A 191-amino-acid chain; its full sequence is Cell division protein SepF (191 aa).

The segment covering 156-167 (EEASPSNMSNKG) has biased composition (polar residues). Residues 156–191 (EEASPSNMSNKGNDLISKETSPAPEPAWGETVATAL) are disordered.

Belongs to the SepF family. As to quaternary structure, homodimer. Interacts with FtsZ.

The protein resides in the cytoplasm. Its function is as follows. Cell division protein that is part of the divisome complex and is recruited early to the Z-ring. Probably stimulates Z-ring formation, perhaps through the cross-linking of FtsZ protofilaments. Its function overlaps with FtsA. This is Cell division protein SepF from Prochlorococcus marinus (strain NATL2A).